We begin with the raw amino-acid sequence, 87 residues long: Exodeoxyribonuclease 7 small subunit (87 aa).

It belongs to the XseB family. As to quaternary structure, heterooligomer composed of large and small subunits.

It is found in the cytoplasm. The catalysed reaction is Exonucleolytic cleavage in either 5'- to 3'- or 3'- to 5'-direction to yield nucleoside 5'-phosphates.. Functionally, bidirectionally degrades single-stranded DNA into large acid-insoluble oligonucleotides, which are then degraded further into small acid-soluble oligonucleotides. In Halorhodospira halophila (strain DSM 244 / SL1) (Ectothiorhodospira halophila (strain DSM 244 / SL1)), this protein is Exodeoxyribonuclease 7 small subunit.